The following is a 1089-amino-acid chain: Probable transport protein MmpL8 (1089 aa).

The disordered stretch occupies residues 1-26 (MCDVLMQPVRTPRPSTNLRSKPLRPT). The next 12 helical transmembrane spans lie at 44-64 (WVVI…VPSL), 222-242 (ITIL…TMVL), 257-277 (LVAI…IFMS), 316-336 (IGKV…GMVF), 349-369 (LGIS…ALMV), 400-420 (KTHL…AGLA), 555-575 (AIST…LLGG), 874-894 (IIAM…RAIV), 898-918 (YLIG…VIVF), 930-950 (IPGL…MLLI), 973-993 (GGVI…LVFA), and 996-1016 (GSVV…TFLV). The interval 1056–1078 (RTKRKPLLPKEEEEQSPPDDDDL) is disordered. The span at 1066–1078 (EEEEQSPPDDDDL) shows a compositional bias: acidic residues.

The protein belongs to the resistance-nodulation-cell division (RND) (TC 2.A.6) family. MmpL subfamily.

Its subcellular location is the cell membrane. The sequence is that of Probable transport protein MmpL8 (mmpL8) from Mycobacterium tuberculosis (strain ATCC 25177 / H37Ra).